A 355-amino-acid polypeptide reads, in one-letter code: MKIRIDIPHHPYDIQIEKGCMAQAGQWLRELWQPQKVVIVTDNHVASLYAEKVKLSLEDAGFQVAVFDFLEGEERKNLTTVQKVYEFLVKQGLTRSDGIVALGGGVVGDLAGFVASTYMRGIHFVQIPTSLTAQVDSSIGGKTGVNTPFAKNMVGTFAQPDGVLIDPLVLETLGKRELIEGMGEVIKYGLIEDPELWALLTGLNGSVESILEHAETLIEHSCQVKRKMVVEDELDNGIRLYLNFGHTIGHAIEATAGYGKVMHGEAVAMGMVQISKVAEEKGLMPAGITQSITEMCQKFGLPVDYENWKVDKLYQALTHDKKARGNTLKLVLVPELGSATIHPVSLEEMKDYLVK.

Residues 71–76 (EGEERK), 105–109 (GVVGD), 129–130 (TS), Lys-142, and Lys-151 contribute to the NAD(+) site. Zn(2+) is bound by residues Glu-184, His-246, and His-263.

It belongs to the sugar phosphate cyclases superfamily. Dehydroquinate synthase family. It depends on Co(2+) as a cofactor. The cofactor is Zn(2+). Requires NAD(+) as cofactor.

The protein localises to the cytoplasm. It catalyses the reaction 7-phospho-2-dehydro-3-deoxy-D-arabino-heptonate = 3-dehydroquinate + phosphate. Its pathway is metabolic intermediate biosynthesis; chorismate biosynthesis; chorismate from D-erythrose 4-phosphate and phosphoenolpyruvate: step 2/7. Its function is as follows. Catalyzes the conversion of 3-deoxy-D-arabino-heptulosonate 7-phosphate (DAHP) to dehydroquinate (DHQ). This is 3-dehydroquinate synthase from Streptococcus pneumoniae (strain Hungary19A-6).